The chain runs to 566 residues: Transcription factor P14E8.02 (566 aa).

The disordered stretch occupies residues 1–32 (MNISSQNVLLPSPIPSSSPMASHKKSWLSKHP). S73 is modified (phosphoserine). The 52-residue stretch at 86–137 (NKIGRSSQQCDHVLSTVDKAISRVHAIVTCTQDRMIIECVGWNGMIVSDKMR) folds into the FHA domain. Disordered stretches follow at residues 191–217 (EENR…SQDY), 269–291 (DCSK…LLNG), 312–334 (ESDD…IEES), and 364–437 (FTNH…TKEN). Residues 314-330 (DDLDKNEEISEGEEYTP) are compositionally biased toward acidic residues. Composition is skewed to polar residues over residues 373-383 (NSNITTSNDSP) and 414-428 (DENT…PSSH). Phosphoserine occurs at positions 379 and 382.

The protein belongs to the PLM2/TOS4 family.

It is found in the nucleus. Functionally, probable transcriptional regulatory protein Required for G1/S progression. The polypeptide is Transcription factor P14E8.02 (Schizosaccharomyces pombe (strain 972 / ATCC 24843) (Fission yeast)).